A 689-amino-acid polypeptide reads, in one-letter code: MEKENHEDDGEGLPPELNQIKEQIEKERFLHIKRKFELRYIPSVATHASHHQSFDLNQPAAEDDNGGDNKSLLSRMQNPLRHFSASSDYNSYEDQGYVLDEDQDYALEEDVPLFLDEDVPLLPSVKLPIVEKLPRSITWVFTKSSQLMAESDSVIGKRQIYYLNGEALELSSEEDEEDEEEDEEEIKKEKCEFSEDVDRFIWTVGQDYGLDDLVVRRALAKYLEVDVSDILERYNELKLKNDGTAGEASDLTSKTITTAFQDFADRRHCRRCMIFDCHMHEKYEPESRSSEDKSSLFEDEDRQPCSEHCYLKVRSVTEADHVMDNDNSISNKIVVSDPNNTMWTPVEKDLYLKGIEIFGRNSCDVALNILRGLKTCLEIYNYMREQDQCTMSLDLNKTTQRHNQVTKKVSRKSSRSVRKKSRLRKYARYPPALKKTTSGEAKFYKHYTPCTCKSKCGQQCPCLTHENCCEKYCGCSKDCNNRFGGCNCAIGQCTNRQCPCFAANRECDPDLCRSCPLSCGDGTLGETPVQIQCKNMQFLLQTNKKILIGKSDVHGWGAFTWDSLKKNEYLGEYTGELITHDEANERGRIEDRIGSSYLFTLNDQLEIDARRKGNEFKFLNHSARPNCYAKLMIVRGDQRIGLFAERAIEEGEELFFDYCYGPEHADWSRGREPRKTGASKRSKEARPAR.

Disordered regions lie at residues 1–20 (MEKE…LNQI), 51–73 (HQSF…KSLL), and 169–188 (ELSS…EIKK). The interaction with FIE stretch occupies residues 1-109 (MEKENHEDDG…DEDQDYALEE (109 aa)). Over residues 171-184 (SSEEDEEDEEEDEE) the composition is skewed to acidic residues. The 51-residue stretch at 339-389 (NNTMWTPVEKDLYLKGIEIFGRNSCDVALNILRGLKTCLEIYNYMREQDQC) folds into the SANT domain. Residues 428 to 532 (RYPPALKKTT…TLGETPVQIQ (105 aa)) enclose the CXC domain. An SET domain is found at 544–659 (KKILIGKSDV…EGEELFFDYC (116 aa)). The segment at 666 to 689 (DWSRGREPRKTGASKRSKEARPAR) is disordered.

This sequence belongs to the class V-like SAM-binding methyltransferase superfamily. Histone-lysine methyltransferase family. EZ subfamily. As to quaternary structure, interacts directly with FIE via its N-terminal domain. These two proteins are probably indirectly associated with FIS2. In plants, PcG complexes are probably composed of a member of the EZ family (CLF or MEA), FIE, and a member of the VEFS family (FIS2, VRN2 or EMF2). Interacts with TAF13. Expressed in unpollinated siliques that contain maturing gametophytes. Not expressed at early stages of floral development during early megagametogenesis.

Its subcellular location is the nucleus. The catalysed reaction is L-lysyl(27)-[histone H3] + 3 S-adenosyl-L-methionine = N(6),N(6),N(6)-trimethyl-L-lysyl(27)-[histone H3] + 3 S-adenosyl-L-homocysteine + 3 H(+). In terms of biological role, polycomb group (PcG) protein. Catalytic subunit of some PcG multiprotein complex, which methylates 'Lys-27' of histone H3, leading to transcriptional repression of the affected target genes. Required to prevent the proliferation of the central cell of the female gametophyte by repressing target genes before fertilization. After fertilization, it probably also regulates the embryo and endosperm proliferation and anteroposterior organization during seed development. PcG proteins act by forming multiprotein complexes, which are required to maintain the transcriptionally repressive state of homeotic genes throughout development. PcG proteins are not required to initiate repression, but to maintain it during later stages of development. Interacts with the promoter and repress the transcription of genes such as PHE1 and PHE2, that are paternally active and maternally silenced genes. The protein is Histone-lysine N-methyltransferase MEDEA (MEA) of Arabidopsis thaliana (Mouse-ear cress).